Consider the following 259-residue polypeptide: 5'-nucleotidase SurE (259 aa).

The a divalent metal cation site is built by Asp8, Asp9, Ser39, and Asn93.

The protein belongs to the SurE nucleotidase family. The cofactor is a divalent metal cation.

The protein localises to the cytoplasm. It carries out the reaction a ribonucleoside 5'-phosphate + H2O = a ribonucleoside + phosphate. Nucleotidase that shows phosphatase activity on nucleoside 5'-monophosphates. The polypeptide is 5'-nucleotidase SurE (Thermococcus kodakarensis (strain ATCC BAA-918 / JCM 12380 / KOD1) (Pyrococcus kodakaraensis (strain KOD1))).